The primary structure comprises 527 residues: Bifunctional purine biosynthesis protein PurH (527 aa).

Residues 1 to 149 (MASDFLPVRR…KNFARVAVAT (149 aa)) enclose the MGS-like domain.

It belongs to the PurH family.

It catalyses the reaction (6R)-10-formyltetrahydrofolate + 5-amino-1-(5-phospho-beta-D-ribosyl)imidazole-4-carboxamide = 5-formamido-1-(5-phospho-D-ribosyl)imidazole-4-carboxamide + (6S)-5,6,7,8-tetrahydrofolate. The enzyme catalyses IMP + H2O = 5-formamido-1-(5-phospho-D-ribosyl)imidazole-4-carboxamide. It functions in the pathway purine metabolism; IMP biosynthesis via de novo pathway; 5-formamido-1-(5-phospho-D-ribosyl)imidazole-4-carboxamide from 5-amino-1-(5-phospho-D-ribosyl)imidazole-4-carboxamide (10-formyl THF route): step 1/1. The protein operates within purine metabolism; IMP biosynthesis via de novo pathway; IMP from 5-formamido-1-(5-phospho-D-ribosyl)imidazole-4-carboxamide: step 1/1. This is Bifunctional purine biosynthesis protein PurH from Xanthomonas oryzae pv. oryzae (strain KACC10331 / KXO85).